We begin with the raw amino-acid sequence, 107 residues long: UPF0122 protein BLi01817/BL02321 (107 aa).

This sequence belongs to the UPF0122 family.

Functionally, might take part in the signal recognition particle (SRP) pathway. This is inferred from the conservation of its genetic proximity to ftsY/ffh. May be a regulatory protein. In Bacillus licheniformis (strain ATCC 14580 / DSM 13 / JCM 2505 / CCUG 7422 / NBRC 12200 / NCIMB 9375 / NCTC 10341 / NRRL NRS-1264 / Gibson 46), this protein is UPF0122 protein BLi01817/BL02321.